The sequence spans 554 residues: Glutamine--tRNA ligase (554 aa).

The 'HIGH' region signature appears at 34–44; the sequence is PEPNGYLHIGH. ATP is bound by residues 35–37 and 41–47; these read EPN and HIGHAKS. 2 residues coordinate L-glutamine: Asp-67 and Tyr-212. Residues Thr-231, 261–262, and 269–271 contribute to the ATP site; these read RL and MSK. The 'KMSKS' region motif lies at 268–272; the sequence is VMSKR. The tract at residues 317-324 is interaction with tRNA; that stretch reads TKQDNTIE.

This sequence belongs to the class-I aminoacyl-tRNA synthetase family. As to quaternary structure, monomer.

The protein resides in the cytoplasm. It catalyses the reaction tRNA(Gln) + L-glutamine + ATP = L-glutaminyl-tRNA(Gln) + AMP + diphosphate. The sequence is that of Glutamine--tRNA ligase from Escherichia coli O157:H7.